The sequence spans 873 residues: Leucine--tRNA ligase (873 aa).

The short motif at 47–57 (PYPSGKLHMGH) is the 'HIGH' region element. Positions 636–640 (KMSKS) match the 'KMSKS' region motif. ATP is bound at residue lysine 639.

It belongs to the class-I aminoacyl-tRNA synthetase family.

It localises to the cytoplasm. The enzyme catalyses tRNA(Leu) + L-leucine + ATP = L-leucyl-tRNA(Leu) + AMP + diphosphate. In Acinetobacter baylyi (strain ATCC 33305 / BD413 / ADP1), this protein is Leucine--tRNA ligase.